The chain runs to 209 residues: NDR1/HIN1-like protein 1 (209 aa).

A helical membrane pass occupies residues 18–38; the sequence is IFWSIIFVLFIIFLTILLIWA. Asparagine 58 carries N-linked (GlcNAc...) asparagine glycosylation.

In terms of tissue distribution, expressed in rosette leaves, cauline leaves, stems, and siliques, and at lower levels in roots and flowers.

It is found in the cell membrane. May play a role in plant immunity. The sequence is that of NDR1/HIN1-like protein 1 from Arabidopsis thaliana (Mouse-ear cress).